Reading from the N-terminus, the 320-residue chain is Lipoyl synthase (320 aa).

Positions 1-27 (MRVEIDHRNSGGGKLRHPEKQHRPDNP) are disordered. Residues 16 to 25 (RHPEKQHRPD) are compositionally biased toward basic and acidic residues. Positions 61, 66, 72, 87, 91, 94, and 300 each coordinate [4Fe-4S] cluster. The Radical SAM core domain maps to 73–289 (WSQRHATMMI…AAMARAKGFL (217 aa)).

It belongs to the radical SAM superfamily. Lipoyl synthase family. [4Fe-4S] cluster serves as cofactor.

The protein resides in the cytoplasm. The catalysed reaction is [[Fe-S] cluster scaffold protein carrying a second [4Fe-4S](2+) cluster] + N(6)-octanoyl-L-lysyl-[protein] + 2 oxidized [2Fe-2S]-[ferredoxin] + 2 S-adenosyl-L-methionine + 4 H(+) = [[Fe-S] cluster scaffold protein] + N(6)-[(R)-dihydrolipoyl]-L-lysyl-[protein] + 4 Fe(3+) + 2 hydrogen sulfide + 2 5'-deoxyadenosine + 2 L-methionine + 2 reduced [2Fe-2S]-[ferredoxin]. It functions in the pathway protein modification; protein lipoylation via endogenous pathway; protein N(6)-(lipoyl)lysine from octanoyl-[acyl-carrier-protein]: step 2/2. Functionally, catalyzes the radical-mediated insertion of two sulfur atoms into the C-6 and C-8 positions of the octanoyl moiety bound to the lipoyl domains of lipoate-dependent enzymes, thereby converting the octanoylated domains into lipoylated derivatives. This Acidiphilium cryptum (strain JF-5) protein is Lipoyl synthase.